The sequence spans 61 residues: Small ribosomal subunit protein uS14 (61 aa).

The Zn(2+) site is built by C24, C27, C40, and C43.

The protein belongs to the universal ribosomal protein uS14 family. Zinc-binding uS14 subfamily. In terms of assembly, part of the 30S ribosomal subunit. Contacts proteins S3 and S10. The cofactor is Zn(2+).

In terms of biological role, binds 16S rRNA, required for the assembly of 30S particles and may also be responsible for determining the conformation of the 16S rRNA at the A site. The sequence is that of Small ribosomal subunit protein uS14 from Acidithiobacillus ferrooxidans (strain ATCC 23270 / DSM 14882 / CIP 104768 / NCIMB 8455) (Ferrobacillus ferrooxidans (strain ATCC 23270)).